A 192-amino-acid chain; its full sequence is Ribosomal RNA small subunit methyltransferase G (192 aa).

Residues Gly63, Leu68, 112 to 113 (IE), and Arg125 each bind S-adenosyl-L-methionine.

Belongs to the methyltransferase superfamily. RNA methyltransferase RsmG family.

The protein resides in the cytoplasm. The catalysed reaction is guanosine(527) in 16S rRNA + S-adenosyl-L-methionine = N(7)-methylguanosine(527) in 16S rRNA + S-adenosyl-L-homocysteine. Its function is as follows. Specifically methylates the N7 position of guanine in position 527 of 16S rRNA. In Rickettsia africae (strain ESF-5), this protein is Ribosomal RNA small subunit methyltransferase G.